Here is a 146-residue protein sequence, read N- to C-terminus: Mitochondrial DnaJ homolog 2 (146 aa).

In terms of domain architecture, J spans 85-146 (EALLILDISA…LERSVLLRKR (62 aa)).

As to quaternary structure, interacts with PAM16/TIM16 and is recruited by the PAM complex.

It is found in the mitochondrion inner membrane. Functionally, plays a role in mitochondrial biogenesis and protein folding. Participates in the translocation of transit peptide-containing proteins from the inner membrane into the mitochondrial matrix in an ATP-dependent manner, probably by stimulating activity of mtHSP70 (SSC1). In Saccharomyces cerevisiae (strain ATCC 204508 / S288c) (Baker's yeast), this protein is Mitochondrial DnaJ homolog 2 (MDJ2).